Reading from the N-terminus, the 262-residue chain is Phosphomannomutase 1 (262 aa).

Residue Ala2 is modified to N-acetylalanine. Asp19 functions as the Nucleophile in the catalytic mechanism. 2 residues coordinate Mg(2+): Asp19 and Asp21. Asp21 functions as the Proton donor/acceptor in the catalytic mechanism. Alpha-D-mannose 1-phosphate contacts are provided by Arg28, Arg132, Arg143, Arg150, Met186, Ser188, and Asp190. Mg(2+)-binding residues include Asn218, Phe230, Asp232, and Thr235. A Phosphoserine modification is found at Ser242.

Belongs to the eukaryotic PMM family. Homodimer. The cofactor is Mg(2+). In terms of tissue distribution, strong expression in liver, heart, brain, and pancreas; lower expression in skeletal muscle.

It localises to the cytoplasm. It catalyses the reaction alpha-D-mannose 1-phosphate = D-mannose 6-phosphate. It participates in nucleotide-sugar biosynthesis; GDP-alpha-D-mannose biosynthesis; alpha-D-mannose 1-phosphate from D-fructose 6-phosphate: step 2/2. IMP, a metabolite whose concentration is elevated in anoxia, inhibits phosphomannomutase and phosphoglucomutase activities and strongly enhances glucose-1,6-bisphosphatase activity. Involved in the synthesis of the GDP-mannose and dolichol-phosphate-mannose required for a number of critical mannosyl transfer reactions. In addition, may be responsible for the degradation of glucose-1,6-bisphosphate in ischemic brain. The chain is Phosphomannomutase 1 (PMM1) from Homo sapiens (Human).